Reading from the N-terminus, the 501-residue chain is Glucose-6-phosphate exchanger SLC37A2 (501 aa).

A helical transmembrane segment spans residues 19 to 39 (SWFRGLILLLTFLIYACYHMS). N53, N62, and N68 each carry an N-linked (GlcNAc...) asparagine glycan. A run of 5 helical transmembrane segments spans residues 88–108 (GGVDNAFLIAYAIGMFISGVF), 118–138 (LSAGMLLSGLFTSLFGLGYFW), 145–165 (YFVVIQVCNGLVQTTGWPSVV), 189–209 (SVGNILGSLIAGIWVNGQWGL), and 210–230 (SFIVPGIITAVMGVITFLFLI). A disordered region spans residues 240–262 (PPQHHGEPAENQDNPEDPGNSPC). 6 consecutive transmembrane segments (helical) span residues 302-322 (LCLLFAKLVSYTFLYWLPLYI), 334-354 (GDLSTLFDVGGIIGGIVAGLV), 362-382 (ATTCCVMLILAAPMMFLYNYI), 391-411 (IVMLIICGGLVNGPYALITTA), 434-454 (AIIDGTGSIGAALGPLLAGLI), and 462-482 (VFYMLISADVLACLLLCRLVY).

Belongs to the major facilitator superfamily. Organophosphate:Pi antiporter (OPA) (TC 2.A.1.4) family. As to expression, detected in intestine and pancreas. Lower expression is also detected in liver and kidney.

The protein resides in the endoplasmic reticulum membrane. It carries out the reaction D-glucose 6-phosphate(in) + phosphate(out) = D-glucose 6-phosphate(out) + phosphate(in). Its activity is regulated as follows. Inhibited by vanadate but not by chlorogenic acid. Inorganic phosphate and glucose-6-phosphate antiporter. May transport cytoplasmic glucose-6-phosphate into the lumen of the endoplasmic reticulum and translocate inorganic phosphate into the opposite direction. Independent of a lumenal glucose-6-phosphatase. May not play a role in homeostatic regulation of blood glucose levels. In Homo sapiens (Human), this protein is Glucose-6-phosphate exchanger SLC37A2.